We begin with the raw amino-acid sequence, 918 residues long: Chaperone protein ClpC4, chloroplastic (918 aa).

The segment at Leu266–Ser515 is i. ATP-binding positions include Gly311–Thr318 and Gly653–Ser660. The interval Val579–Ser774 is II.

The protein belongs to the ClpA/ClpB family. ClpC subfamily.

The protein resides in the plastid. It localises to the chloroplast. Its function is as follows. Molecular chaperone that may interact with a ClpP-like protease involved in degradation of denatured proteins in the chloroplast. The polypeptide is Chaperone protein ClpC4, chloroplastic (CPLC4) (Oryza sativa subsp. japonica (Rice)).